Here is a 408-residue protein sequence, read N- to C-terminus: Putative transporter AmpG 2 (408 aa).

Transmembrane regions (helical) follow at residues 11–31 (IFNI…YLLT), 49–69 (IGLF…GPLL), 84–104 (YCLV…TSFN), 110–130 (TPFV…DMLI), 154–174 (FRIG…IISW), 177–197 (VYRT…FYPL), 224–244 (WIVI…LSIM), 261–281 (IGYK…GGFL), 294–311 (VLIY…LYFL), 315–337 (IISL…SPFF), 353–373 (IALI…ISGY), and 382–402 (YFFI…LYLP).

This sequence belongs to the major facilitator superfamily.

Its subcellular location is the cell inner membrane. The polypeptide is Putative transporter AmpG 2 (ampG2) (Rickettsia typhi (strain ATCC VR-144 / Wilmington)).